The chain runs to 121 residues: Outer membrane lipoprotein BBA14 (121 aa).

The N-terminal stretch at Met-1–Ser-19 is a signal peptide. A lipid anchor (N-palmitoyl cysteine) is attached at Cys-20. Residue Cys-20 is the site of S-diacylglycerol cysteine attachment.

It localises to the cell outer membrane. Its function is as follows. Outer membrane lipoprotein that could act as a component of a potential toxin-antitoxin system in B.burgdorferi which could serve as a plasmid stabilization mechanism in a growing bacterial population. This is Outer membrane lipoprotein BBA14 from Borreliella burgdorferi (strain ATCC 35210 / DSM 4680 / CIP 102532 / B31) (Borrelia burgdorferi).